A 160-amino-acid polypeptide reads, in one-letter code: Nucleotide-binding protein VP1617 (160 aa).

This sequence belongs to the YajQ family.

Functionally, nucleotide-binding protein. This Vibrio parahaemolyticus serotype O3:K6 (strain RIMD 2210633) protein is Nucleotide-binding protein VP1617.